The sequence spans 449 residues: Exodeoxyribonuclease 7 large subunit (449 aa).

It belongs to the XseA family. As to quaternary structure, heterooligomer composed of large and small subunits.

Its subcellular location is the cytoplasm. It catalyses the reaction Exonucleolytic cleavage in either 5'- to 3'- or 3'- to 5'-direction to yield nucleoside 5'-phosphates.. Functionally, bidirectionally degrades single-stranded DNA into large acid-insoluble oligonucleotides, which are then degraded further into small acid-soluble oligonucleotides. The sequence is that of Exodeoxyribonuclease 7 large subunit from Latilactobacillus sakei subsp. sakei (strain 23K) (Lactobacillus sakei subsp. sakei).